The chain runs to 49 residues: Light-harvesting protein B-880 alpha chain (49 aa).

Residues 1-12 (MYKLWLLFDPRR) are Cytoplasmic-facing. The helical transmembrane segment at 13–33 (TLVALSAFLFVLGLIIHFISL) threads the bilayer. His29 is a binding site for a bacteriochlorophyll. The Periplasmic segment spans residues 34–49 (STDRFNWLEGKPAVRA).

Belongs to the antenna complex alpha subunit family. As to quaternary structure, the core complex is formed by different alpha and beta chains, binding bacteriochlorophyll molecules, and arranged most probably in tetrameric structures disposed around the reaction center. The non-pigmented gamma chains may constitute additional components.

It localises to the cell inner membrane. Antenna complexes are light-harvesting systems, which transfer the excitation energy to the reaction centers. The chain is Light-harvesting protein B-880 alpha chain from Rhodoblastus acidophilus (Rhodopseudomonas acidophila).